The primary structure comprises 359 residues: Probable F-box protein At3g61730 (359 aa).

2 stretches are compositionally biased toward basic and acidic residues: residues 1–14 and 37–48; these read MKTRSSDAEGDSRG and QKNDIQREEDGR. Positions 1 to 60 are disordered; it reads MKTRSSDAEGDSRGKMIAPVGEGNGGRKRKLVQSNEQKNDIQREEDGRAKRRIVQSSDQK. In terms of domain architecture, F-box; degenerate spans 82 to 128; the sequence is QSRFSWYEQDIWTYISRFLDGKSLVKLGATNKWFYKIAMEDTVWRFA.

In terms of assembly, interacts with SKP1A. Expressed in flower buds, developing anthers, pollen grains, siliques, rosette leaves and roots. Detected at lower levels in open flowers, stems and cauline leaves. Expressed in young seedling in the hydathodes, shoot apical meristem, root tips and lateral root primordia.

Its subcellular location is the nucleus. In terms of biological role, regulates tapetum degeneration and pollen maturation during anther development. The sequence is that of Probable F-box protein At3g61730 (RMF) from Arabidopsis thaliana (Mouse-ear cress).